We begin with the raw amino-acid sequence, 207 residues long: Outer-membrane lipoprotein LolB (207 aa).

A signal peptide spans 1–21 (MTLPDFRLIRLLPLASLVLTA). A lipid anchor (N-palmitoyl cysteine) is attached at Cys22. The S-diacylglycerol cysteine moiety is linked to residue Cys22.

Belongs to the LolB family. As to quaternary structure, monomer.

Its subcellular location is the cell outer membrane. Functionally, plays a critical role in the incorporation of lipoproteins in the outer membrane after they are released by the LolA protein. The polypeptide is Outer-membrane lipoprotein LolB (Citrobacter koseri (strain ATCC BAA-895 / CDC 4225-83 / SGSC4696)).